A 160-amino-acid polypeptide reads, in one-letter code: MPALILPLIEAAGHWPARGSLLGLDLGTKTIGVAVSDPDRRLATGIETVARKAFTADAQRLLALAAGRNACGFVLGLPLNMDGSEGPRVQSTRAFARNFARLTELPIGLWDERLSTAAVERELIANDVSRAKRAKIIDEHAAIYILQGALDRLATLNRAD.

The protein belongs to the YqgF nuclease family.

Its subcellular location is the cytoplasm. Could be a nuclease involved in processing of the 5'-end of pre-16S rRNA. The protein is Putative pre-16S rRNA nuclease of Rhodopseudomonas palustris (strain HaA2).